Here is a 611-residue protein sequence, read N- to C-terminus: Broad-specificity linear acyl-CoA dehydrogenase FadE5 (611 aa).

FAD is bound by residues 162-165 (MVLT), serine 171, and threonine 198. Serine 171 contributes to the a 2,3-saturated acyl-CoA binding site. A 2,3-saturated acyl-CoA-binding positions include 224 to 225 (TK) and arginine 301. Arginine 326 contacts FAD. Residue lysine 338 participates in a 2,3-saturated acyl-CoA binding. An FAD-binding site is contributed by 420-424 (QTLGG). Glutamate 447 serves as a coordination point for a 2,3-saturated acyl-CoA. Catalysis depends on glutamate 447, which acts as the Proton acceptor. Threonine 449 provides a ligand contact to FAD. Residues aspartate 456 and 460–461 (RK) each bind a 2,3-saturated acyl-CoA.

Belongs to the acyl-CoA dehydrogenase family. In terms of assembly, homodimer. Requires FAD as cofactor.

The enzyme catalyses a long-chain 2,3-saturated fatty acyl-CoA + oxidized [electron-transfer flavoprotein] + H(+) = a long-chain (2E)-enoyl-CoA + reduced [electron-transfer flavoprotein]. It catalyses the reaction a medium-chain 2,3-saturated fatty acyl-CoA + oxidized [electron-transfer flavoprotein] + H(+) = a medium-chain (2E)-enoyl-CoA + reduced [electron-transfer flavoprotein]. The catalysed reaction is a short-chain 2,3-saturated fatty acyl-CoA + oxidized [electron-transfer flavoprotein] + H(+) = a short-chain (2E)-enoyl-CoA + reduced [electron-transfer flavoprotein]. It carries out the reaction octadecanoyl-CoA + oxidized [electron-transfer flavoprotein] + H(+) = (2E)-octadecenoyl-CoA + reduced [electron-transfer flavoprotein]. The enzyme catalyses oxidized [electron-transfer flavoprotein] + hexadecanoyl-CoA + H(+) = (2E)-hexadecenoyl-CoA + reduced [electron-transfer flavoprotein]. It catalyses the reaction dodecanoyl-CoA + oxidized [electron-transfer flavoprotein] + H(+) = (2E)-dodecenoyl-CoA + reduced [electron-transfer flavoprotein]. The catalysed reaction is decanoyl-CoA + oxidized [electron-transfer flavoprotein] + H(+) = (2E)-decenoyl-CoA + reduced [electron-transfer flavoprotein]. It carries out the reaction hexanoyl-CoA + oxidized [electron-transfer flavoprotein] + H(+) = (2E)-hexenoyl-CoA + reduced [electron-transfer flavoprotein]. The enzyme catalyses butanoyl-CoA + oxidized [electron-transfer flavoprotein] + H(+) = (2E)-butenoyl-CoA + reduced [electron-transfer flavoprotein]. The protein operates within lipid metabolism; fatty acid metabolism. Its function is as follows. Acyl-CoA dehydrogenase that exhibits broad specificity for linear acyl-CoA substrates, with a preference for long-chain substrates. This Mycobacterium tuberculosis (strain ATCC 25618 / H37Rv) protein is Broad-specificity linear acyl-CoA dehydrogenase FadE5.